The sequence spans 351 residues: Protein-glutamate methylesterase/protein-glutamine glutaminase 1 (351 aa).

The region spanning 1 to 115 (MVDDSAVVRQ…KQFLTESADE (115 aa)) is the Response regulatory domain. Position 49 is a 4-aspartylphosphate (aspartate 49). The region spanning 161-351 (AQTTERIVAI…MAREIVTQLQ (191 aa)) is the CheB-type methylesterase domain. Active-site residues include serine 173, histidine 199, and aspartate 295.

The protein belongs to the CheB family. In terms of processing, phosphorylated by CheA. Phosphorylation of the N-terminal regulatory domain activates the methylesterase activity.

The protein localises to the cytoplasm. It carries out the reaction [protein]-L-glutamate 5-O-methyl ester + H2O = L-glutamyl-[protein] + methanol + H(+). It catalyses the reaction L-glutaminyl-[protein] + H2O = L-glutamyl-[protein] + NH4(+). Functionally, involved in chemotaxis. Part of a chemotaxis signal transduction system that modulates chemotaxis in response to various stimuli. Catalyzes the demethylation of specific methylglutamate residues introduced into the chemoreceptors (methyl-accepting chemotaxis proteins or MCP) by CheR. Also mediates the irreversible deamidation of specific glutamine residues to glutamic acid. The protein is Protein-glutamate methylesterase/protein-glutamine glutaminase 1 of Xanthomonas oryzae pv. oryzae (strain MAFF 311018).